Reading from the N-terminus, the 130-residue chain is Large ribosomal subunit protein bL21 (130 aa).

The interval threonine 110 to glutamate 130 is disordered.

The protein belongs to the bacterial ribosomal protein bL21 family. As to quaternary structure, part of the 50S ribosomal subunit. Contacts protein L20.

In terms of biological role, this protein binds to 23S rRNA in the presence of protein L20. The protein is Large ribosomal subunit protein bL21 of Nostoc sp. (strain PCC 7120 / SAG 25.82 / UTEX 2576).